Consider the following 409-residue polypeptide: uncharacterized protein (409 aa).

Positions 1–26 (MKKELLASLVLCLSLSPLVSTNEVFA) are cleaved as a signal peptide.

This is an uncharacterized protein from Bacillus subtilis (strain 168).